The primary structure comprises 896 residues: Pentatricopeptide repeat-containing protein At5g03800 (896 aa).

17 PPR repeats span residues 113 to 143 (KTRL…LSSP), 144 to 178 (TVVS…GLVQ), 180 to 214 (NEYT…GFLN), 215 to 247 (SVFV…IPQR), 248 to 278 (DVAS…MNRV), 284 to 318 (DSFT…GLMQ), 319 to 349 (ELSV…MMAQ), 350 to 380 (DAVT…VTEK), 381 to 415 (NTIT…GVEL), 416 to 450 (TDFS…GTAF), 451 to 481 (NPCI…WPSN), 484 to 519 (SSKA…KLFL), 520 to 554 (DEVS…GYFS), 555 to 585 (DISL…MREH), 586 to 620 (DVIS…EIKP), 621 to 653 (DIIT…MKTI), and 659 to 689 (TTEH…MPVQ). The segment at 694–769 (VLRALLDSCR…HPAKSWIIHE (76 aa)) is type E motif. Residues 770-800 (NKIHSFHARDTSHPQEKDIYRGLEILIMECL) form a type E(+) motif region. A type DYW motif region spans residues 801–896 (KVGYEPNTEY…NGKCSCRDLW (96 aa)).

Belongs to the PPR family. PCMP-H subfamily.

May play a role in embryogenesis. This is Pentatricopeptide repeat-containing protein At5g03800 (EMB175) from Arabidopsis thaliana (Mouse-ear cress).